The following is a 108-amino-acid chain: UPF0060 membrane protein YnfA (108 aa).

Residues 1–5 (MIKTT) lie on the Periplasmic side of the membrane. Residues 6–26 (LLFFATALCEIIGCFLPWLWL) traverse the membrane as a helical segment. The Cytoplasmic segment spans residues 27–30 (KRNA). The helical transmembrane segment at 31–51 (SIWLLLPAGISLALFVWLLTL) threads the bilayer. The Periplasmic portion of the chain corresponds to 52-60 (HPAASGRVY). A helical membrane pass occupies residues 61 to 81 (AAYGGVYVCTALIWLRVVDGV). Topologically, residues 82–84 (KLT) are cytoplasmic. A helical transmembrane segment spans residues 85-105 (LYDWTGALIALCGMLIIVAGW). The Periplasmic segment spans residues 106 to 108 (GRT).

The protein belongs to the UPF0060 family.

The protein localises to the cell inner membrane. The protein is UPF0060 membrane protein YnfA of Escherichia coli O127:H6 (strain E2348/69 / EPEC).